Consider the following 754-residue polypeptide: Circadian input-output histidine kinase CikA (754 aa).

The interval Met1–Leu183 is N-terminal domain, not required to complement the deletion strain. Residues Asp184–His338 form a GAF domain, required to complement the deletion strain region. The Histidine kinase domain occupies Thr390–Thr611. Position 393 is a phosphohistidine; by autocatalysis (His393). The psR domain, required to complement the deletion strain and for cell pole localization, attenuates autophosphorylation activity. Binds KaiB(fs) stretch occupies residues Trp606–Ser754. The 114-residue stretch at His629–Cys742 folds into the Response regulatory domain.

This sequence in the N-terminal section; belongs to the phytochrome family. In terms of assembly, homodimer. Part of the circadian clock (KaiA, KaiB, KaiC, CikA, RpaA, SasA), the composition of which varies during the circadian cycle. Interacts with LdpA. KaiA and CikA compete for binding to KaiB(fs).

The protein resides in the cytoplasm. The protein localises to the membrane. The catalysed reaction is ATP + protein L-histidine = ADP + protein N-phospho-L-histidine.. Functions in an input pathway to the Kai circadian clock. Senses oxidized quinones via its C-terminal pseudo-receiver domain, providing a link between cell metabolism and the clock. Affects the ratio of phosphorylated to unphosphorylated KaiC, binds quinones via its pseudo-receptor domain. Quinone-binding destabilizes the protein rapidly. Autophosphorylates, does not transfer the phosphate to its pseudo-receiver (PsR) domain. May play a role in cell division, as suggested by its polar location and increased cell length in a deletion strain. In terms of biological role, member of the two-component regulatory system CikA/RpaA output pathway from the circadian clock, negatively regulating kaiBC expression independently of labA and of sasA. One of three clock output pathways. Dephosphorylates phospho-RpaA, enhanced by KaiB and KaiC, has only modest kinase activity on RpaA. A very robust clock is reconstituted with KaiA, KaiB, KaiC, SasA, CikA and RpaA; output is measured by transcription from an appropriate reporter. In Synechococcus elongatus (strain ATCC 33912 / PCC 7942 / FACHB-805) (Anacystis nidulans R2), this protein is Circadian input-output histidine kinase CikA.